A 1720-amino-acid chain; its full sequence is DNA-directed RNA polymerase I subunit RPA1 (1720 aa).

6 residues coordinate Zn(2+): Cys64, Cys67, Cys74, His77, Cys104, and Cys107. A clamp region spans residues 110–201; it reads LTCPRAVIHL…IALFWKAHMN (92 aa). Zn(2+)-binding residues include Cys205 and Cys208. Ser240 is subject to Phosphoserine. The clamp stretch occupies residues 320–426; that stretch reads FTNGQTVNLQ…IRQILEKKEG (107 aa). Residues 403–416 form a rudder region; the sequence is DSEMDKLMMDKYPG. DNA-binding residues include Lys424, Arg429, and Arg436. Residues 468-542 form an involved in RRN3 binding to Pol I complex region; the sequence is YPQPVTPWNV…QGTKIVCRHV (75 aa). An RNA-binding site is contributed by Arg552. Mg(2+) is bound by residues Asp588, Asp590, and Asp592. Asp592 lines the RNA pocket. The segment at 805–883 is funnel; sequence KPKADVKRQR…NEINKACMPF (79 aa). Residues 960 to 1001 are bridging helix; sequence KPPEFFFHCMAGREGLVDTAVKTSRSGYLQRCIIKHLEGLVV. The interval 1060-1155 is mediates the interaction with TOP2A; it reads ADPKKALHHF…SLSVWRPDIY (96 aa). Residues 1207–1248 are trigger loop; that stretch reads PGEAVGLLAAQSIGEPSTQMTLNTFHFAGRGEMNVTLGIPRL. Residue Arg1249 coordinates DNA. Positions 1365–1498 are disordered; sequence RNVNTRRATQ…SQEPQGPEAM (134 aa). A compositionally biased stretch (basic and acidic residues) spans 1373 to 1390; sequence TQRDLDNAGELGRSRGEQ. Ser1386 carries the phosphoserine modification. 2 stretches are compositionally biased toward acidic residues: residues 1391 to 1412 and 1422 to 1446; these read EGDE…DADA and EEEV…EDMQ. Positions 1447 to 1461 are enriched in basic and acidic residues; it reads EERNPHREGARKTQE. A compositionally biased stretch (acidic residues) spans 1462 to 1474; sequence QDEEVGLGTEEDP.

This sequence belongs to the RNA polymerase beta' chain family. As to quaternary structure, component of the RNA polymerase I (Pol I) complex consisting of 13 subunits: a ten-subunit catalytic core composed of POLR1A/RPA1, POLR1B/RPA2, POLR1C/RPAC1, POLR1D/RPAC2, POLR1H/RPA12, POLR2E/RPABC1, POLR2F/RPABC2, POLR2H/RPABC3, POLR2K/RPABC4 and POLR2L/RPABC5; a mobile stalk subunit POLR1F/RPA43 protruding from the core and additional subunits homologous to general transcription factors POLR1E/RPA49 and POLR1G/RPA34. Part of Pol I pre-initiation complex (PIC), in which Pol I core assembles with RRN3 and promoter-bound UTBF and SL1/TIF-IB complex. Interacts (via dock II domain) with TOP2A; this interaction may assist Pol I transcription initiation by releasing supercoils occurring during DNA unwinding. Interacts with CAVIN1; this interaction induces the dissociation of Pol I complex paused at rDNA terminator sequences. Interacts with MYO1C. Interacts with ERBB2. Interacts with DDX11. Interacts with RECQL5. Mg(2+) is required as a cofactor.

The protein localises to the nucleus. The protein resides in the nucleolus. It localises to the chromosome. The catalysed reaction is RNA(n) + a ribonucleoside 5'-triphosphate = RNA(n+1) + diphosphate. In terms of biological role, catalytic core component of RNA polymerase I (Pol I), a DNA-dependent RNA polymerase which synthesizes ribosomal RNA precursors using the four ribonucleoside triphosphates as substrates. Transcribes 47S pre-rRNAs from multicopy rRNA gene clusters, giving rise to 5.8S, 18S and 28S ribosomal RNAs. Pol I-mediated transcription cycle proceeds through transcription initiation, transcription elongation and transcription termination stages. During transcription initiation, Pol I pre-initiation complex (PIC) is recruited by the selectivity factor 1 (SL1/TIF-IB) complex bound to the core promoter that precedes an rDNA repeat unit. The PIC assembly bends the promoter favoring the formation of the transcription bubble and promoter escape. Once the polymerase has escaped from the promoter it enters the elongation phase during which RNA is actively polymerized, based on complementarity with the template DNA strand. Highly processive, assembles in structures referred to as 'Miller trees' where many elongating Pol I complexes queue and transcribe the same rDNA coding regions. At terminator sequences downstream of the rDNA gene, PTRF interacts with Pol I and halts Pol I transcription leading to the release of the RNA transcript and polymerase from the DNA. Forms Pol I active center together with the second largest subunit POLR1B/RPA2. Appends one nucleotide at a time to the 3' end of the nascent RNA, with POLR1A/RPA1 contributing a Mg(2+)-coordinating DxDGD motif, and POLR1B/RPA2 participating in the coordination of a second Mg(2+) ion and providing lysine residues believed to facilitate Watson-Crick base pairing between the incoming nucleotide and the template base. Typically, Mg(2+) ions direct a 5' nucleoside triphosphate to form a phosphodiester bond with the 3' hydroxyl of the preceding nucleotide of the nascent RNA, with the elimination of pyrophosphate. Has proofreading activity: Pauses and backtracks to allow the cleavage of a missincorporated nucleotide via POLR1H/RPA12. High Pol I processivity is associated with decreased transcription fidelity. The sequence is that of DNA-directed RNA polymerase I subunit RPA1 from Homo sapiens (Human).